The following is a 466-amino-acid chain: Pyruvate kinase (466 aa).

Position 32 (arginine 32) interacts with substrate. Positions 34, 36, and 66 each coordinate K(+). Position 34–37 (34–37 (NTSH)) interacts with ATP. Arginine 73 provides a ligand contact to ATP. Glutamate 219 contributes to the Mg(2+) binding site. Glycine 242, aspartate 243, and threonine 275 together coordinate substrate. Aspartate 243 is a binding site for Mg(2+).

It belongs to the pyruvate kinase family. In terms of assembly, homotetramer. The cofactor is a divalent metal cation.

It catalyses the reaction pyruvate + ATP = phosphoenolpyruvate + ADP + H(+). It participates in carbohydrate degradation; glycolysis; pyruvate from D-glyceraldehyde 3-phosphate: step 5/5. Its activity is regulated as follows. Allosterically activated by AMP and inhibited by ATP. This chain is Pyruvate kinase (pyk), found in Thermotoga maritima (strain ATCC 43589 / DSM 3109 / JCM 10099 / NBRC 100826 / MSB8).